A 346-amino-acid polypeptide reads, in one-letter code: Fructose-1,6-bisphosphatase class 1 (346 aa).

Residues E96, D119, L121, and D122 each contribute to the Mg(2+) site. Substrate contacts are provided by residues 122–125 (DGSS), N214, Y247, and K277. E283 contributes to the Mg(2+) binding site.

This sequence belongs to the FBPase class 1 family. Homotetramer. Mg(2+) serves as cofactor.

It is found in the cytoplasm. It catalyses the reaction beta-D-fructose 1,6-bisphosphate + H2O = beta-D-fructose 6-phosphate + phosphate. It functions in the pathway carbohydrate biosynthesis; gluconeogenesis. This is Fructose-1,6-bisphosphatase class 1 from Cytophaga hutchinsonii (strain ATCC 33406 / DSM 1761 / CIP 103989 / NBRC 15051 / NCIMB 9469 / D465).